The primary structure comprises 317 residues: Aspartate carbamoyltransferase catalytic subunit (317 aa).

Carbamoyl phosphate-binding residues include Arg66 and Thr67. Lys94 lines the L-aspartate pocket. The carbamoyl phosphate site is built by Arg116, His144, and Gln147. Residues Arg177 and Arg231 each contribute to the L-aspartate site. Gly272 and Pro273 together coordinate carbamoyl phosphate.

Belongs to the aspartate/ornithine carbamoyltransferase superfamily. ATCase family. In terms of assembly, heterododecamer (2C3:3R2) of six catalytic PyrB chains organized as two trimers (C3), and six regulatory PyrI chains organized as three dimers (R2).

It catalyses the reaction carbamoyl phosphate + L-aspartate = N-carbamoyl-L-aspartate + phosphate + H(+). It functions in the pathway pyrimidine metabolism; UMP biosynthesis via de novo pathway; (S)-dihydroorotate from bicarbonate: step 2/3. Functionally, catalyzes the condensation of carbamoyl phosphate and aspartate to form carbamoyl aspartate and inorganic phosphate, the committed step in the de novo pyrimidine nucleotide biosynthesis pathway. The chain is Aspartate carbamoyltransferase catalytic subunit from Nitrobacter hamburgensis (strain DSM 10229 / NCIMB 13809 / X14).